Reading from the N-terminus, the 262-residue chain is MAHLLEKTRKITSILKRSEEQLQDELPYNAITRQLADIIHCNACIINSKGRLLGYFMRYKTNTDRVEQFFQTKIFPDDYVQGANMIYETEANLPVEHDMSIFPIESRDDFPDGLTTIAPIHVSGIRLGSLIIWRNDKKFEDEDLVLVEIASTVVGIQLLNFQREEDEKNIRRRTAVTMAVNTLSYSELRAVSAILGELNGNEGKLTASVIADRIGITRSVIVNALRKLESAGIIESRSLGMKGTYLKVLISDIFEEVKKRDY.

The interval M1–L159 is GAF domain. Positions A207–R226 form a DNA-binding region, H-T-H motif.

The protein belongs to the CodY family.

Its subcellular location is the cytoplasm. In terms of biological role, DNA-binding global transcriptional regulator which is involved in the adaptive response to starvation and acts by directly or indirectly controlling the expression of numerous genes in response to nutrient availability. During rapid exponential growth, CodY is highly active and represses genes whose products allow adaptation to nutrient depletion. The chain is Global transcriptional regulator CodY from Streptococcus pneumoniae serotype 4 (strain ATCC BAA-334 / TIGR4).